The sequence spans 294 residues: 4-hydroxy-tetrahydrodipicolinate synthase (294 aa).

Residue Thr-45 participates in pyruvate binding. The Proton donor/acceptor role is filled by Tyr-133. The active-site Schiff-base intermediate with substrate is the Lys-161. Ile-203 contributes to the pyruvate binding site.

The protein belongs to the DapA family. Homotetramer; dimer of dimers.

It localises to the cytoplasm. The catalysed reaction is L-aspartate 4-semialdehyde + pyruvate = (2S,4S)-4-hydroxy-2,3,4,5-tetrahydrodipicolinate + H2O + H(+). The protein operates within amino-acid biosynthesis; L-lysine biosynthesis via DAP pathway; (S)-tetrahydrodipicolinate from L-aspartate: step 3/4. Functionally, catalyzes the condensation of (S)-aspartate-beta-semialdehyde [(S)-ASA] and pyruvate to 4-hydroxy-tetrahydrodipicolinate (HTPA). The sequence is that of 4-hydroxy-tetrahydrodipicolinate synthase from Shewanella sp. (strain ANA-3).